Reading from the N-terminus, the 206-residue chain is Ribosomal RNA small subunit methyltransferase G (206 aa).

S-adenosyl-L-methionine is bound by residues G73, L78, 124-125 (VE), and R139.

This sequence belongs to the methyltransferase superfamily. RNA methyltransferase RsmG family.

The protein localises to the cytoplasm. The enzyme catalyses guanosine(527) in 16S rRNA + S-adenosyl-L-methionine = N(7)-methylguanosine(527) in 16S rRNA + S-adenosyl-L-homocysteine. Its function is as follows. Specifically methylates the N7 position of guanine in position 527 of 16S rRNA. This is Ribosomal RNA small subunit methyltransferase G from Edwardsiella ictaluri (strain 93-146).